Reading from the N-terminus, the 432-residue chain is UDP-N-acetylmuramate--L-alanine ligase (432 aa).

Position 109-115 (109-115) interacts with ATP; sequence GAHGKST.

It belongs to the MurCDEF family.

It is found in the cytoplasm. The catalysed reaction is UDP-N-acetyl-alpha-D-muramate + L-alanine + ATP = UDP-N-acetyl-alpha-D-muramoyl-L-alanine + ADP + phosphate + H(+). Its pathway is cell wall biogenesis; peptidoglycan biosynthesis. Its function is as follows. Cell wall formation. This chain is UDP-N-acetylmuramate--L-alanine ligase, found in Campylobacter jejuni subsp. jejuni serotype O:2 (strain ATCC 700819 / NCTC 11168).